We begin with the raw amino-acid sequence, 55 residues long: MAKPASIKIKLESTADTGYFYVTKKNSRTMTEKMVIKKYDPIARKHVEFKETKIK.

The protein belongs to the bacterial ribosomal protein bL33 family.

This Parvibaculum lavamentivorans (strain DS-1 / DSM 13023 / NCIMB 13966) protein is Large ribosomal subunit protein bL33.